The sequence spans 92 residues: C-C motif chemokine 3 (92 aa).

The first 26 residues, 1–26 (MQVSTAALAVLLCTVALCNRISATFA), serve as a signal peptide directing secretion. Cystine bridges form between C33–C57 and C34–C73.

Belongs to the intercrine beta (chemokine CC) family. In terms of assembly, self-associates. Also heterodimer of MIP-1-alpha(4-69) and MIP-1-beta(3-69). Interacts with CCR1.

The protein localises to the secreted. Its function is as follows. Monokine with inflammatory and chemokinetic properties. Binds to CCR1, CCR4 and CCR5. One of the major HIV-suppressive factors produced by CD8+ T-cells. Recombinant MIP-1-alpha induces a dose-dependent inhibition of different strains of HIV-1, HIV-2, and simian immunodeficiency virus (SIV). This is C-C motif chemokine 3 (CCL3) from Macaca mulatta (Rhesus macaque).